The chain runs to 2112 residues: Phenolphthiocerol synthesis polyketide synthase type I Pks15/1 (2112 aa).

The Ketosynthase family 3 (KS3) domain occupies 46 to 469 (TEPVAVVGIG…GTNAHLILEE (424 aa)). Catalysis depends on for beta-ketoacyl synthase activity residues Cys-216, His-351, and His-391. Positions 579–893 (TVVVFPGQGA…GQVFTTGVPV (315 aa)) are acyltransferase. The For acyltransferase activity role is filled by Ser-670. Residues 941 to 1063 (HALLGAVVER…GMLGVAAAET (123 aa)) are N-terminal hotdog fold. The segment at 941–1101 (HALLGAVVER…YAYGPAFQGL (161 aa)) is dehydratase. Residues 941-1215 (HALLGAVVER…TRPITAEQLR (275 aa)) enclose the PKS/mFAS DH domain. His-973 acts as the Proton acceptor; for dehydratase activity in catalysis. The segment at 1075–1215 (AESVDISDGY…TRPITAEQLR (141 aa)) is C-terminal hotdog fold. The active-site Proton donor; for dehydratase activity is Asp-1136. The enoylreductase stretch occupies residues 1406–1711 (GTLEDLVIQP…QARHIGKVVL (306 aa)). NADP(+) contacts are provided by residues 1536 to 1553 (VLIHAGTGGVGMAAVQLA) and 1725 to 1740 (TVVITGATGAVGGVLA). A beta-ketoacyl reductase region spans residues 1724 to 1905 (GTVVITGATG…SLAWGLWEQP (182 aa)). Positions 2010–2085 (ELLVGLVCLQ…AVAEYVAQQM (76 aa)) constitute a Carrier domain. Position 2045 is an O-(pantetheine 4'-phosphoryl)serine (Ser-2045). Residues 2084 to 2100 (QMSGSRPTESGDPTSQV) show a composition bias toward polar residues. The disordered stretch occupies residues 2084–2112 (QMSGSRPTESGDPTSQVVEPAAAEVSVHA).

The protein belongs to the thiolase-like superfamily. Beta-ketoacyl-ACP synthases family. It depends on pantetheine 4'-phosphate as a cofactor.

The enzyme catalyses a fatty acyl-[ACP] + malonyl-[ACP] + H(+) = a 3-oxoacyl-[ACP] + holo-[ACP] + CO2. It functions in the pathway lipid metabolism; fatty acid biosynthesis. Its function is as follows. Catalyzes the elongation by iterative transfer of p-hydroxybenzoyl group from FadD22 (pHBA-S-FAdD22) to form p-hydroxyphenylalkanoate (pHPA) intermediates during phenolphthiocerol (PPOL) biosynthesis. PPOL is an important intermediate in the biosynthesis of phenolic glycolipid (mycosid B). The polypeptide is Phenolphthiocerol synthesis polyketide synthase type I Pks15/1 (pks15/1) (Mycobacterium bovis (strain ATCC BAA-935 / AF2122/97)).